A 974-amino-acid polypeptide reads, in one-letter code: Membrane-associated phosphatidylinositol transfer protein 3 (974 aa).

Residues serine 30, serine 31, serine 109, serine 295, serine 298, serine 321, serine 343, and serine 495 each carry the phosphoserine modification. The disordered stretch occupies residues glycine 284–valine 304. Polar residues predominate over residues arginine 292–threonine 302. 2 disordered regions span residues isoleucine 323–serine 346 and serine 491–proline 536. Positions phenylalanine 390–arginine 594 constitute a DDHD domain. Over residues glutamate 520–serine 533 the composition is skewed to low complexity. Phosphoserine is present on residues serine 612, serine 907, serine 928, and serine 946. A disordered region spans residues methionine 927–proline 974.

The protein belongs to the PtdIns transfer protein family. PI transfer class IIA subfamily. In terms of assembly, interacts with PTK2B via its C-terminus. In terms of tissue distribution, detected in brain and spleen, and at low levels in ovary.

It localises to the endomembrane system. Catalyzes the transfer of phosphatidylinositol and phosphatidylcholine between membranes (in vitro). Binds calcium ions. The polypeptide is Membrane-associated phosphatidylinositol transfer protein 3 (PITPNM3) (Homo sapiens (Human)).